A 338-amino-acid chain; its full sequence is Tetraacyldisaccharide 4'-kinase (338 aa).

Residue Thr-53 to Thr-60 participates in ATP binding.

This sequence belongs to the LpxK family.

The catalysed reaction is a lipid A disaccharide + ATP = a lipid IVA + ADP + H(+). The protein operates within glycolipid biosynthesis; lipid IV(A) biosynthesis; lipid IV(A) from (3R)-3-hydroxytetradecanoyl-[acyl-carrier-protein] and UDP-N-acetyl-alpha-D-glucosamine: step 6/6. Transfers the gamma-phosphate of ATP to the 4'-position of a tetraacyldisaccharide 1-phosphate intermediate (termed DS-1-P) to form tetraacyldisaccharide 1,4'-bis-phosphate (lipid IVA). The protein is Tetraacyldisaccharide 4'-kinase of Azorhizobium caulinodans (strain ATCC 43989 / DSM 5975 / JCM 20966 / LMG 6465 / NBRC 14845 / NCIMB 13405 / ORS 571).